A 141-amino-acid chain; its full sequence is uncharacterized protein (141 aa).

Positions 8–112 (IGQVFKTKSL…VLDKQPKRNE (105 aa)) constitute a MaoC-like domain.

This is an uncharacterized protein from Bacillus subtilis (strain 168).